The primary structure comprises 162 residues: UPF0460 protein y4xD (162 aa).

This sequence belongs to the UPF0460 family.

The sequence is that of UPF0460 protein y4xD from Sinorhizobium fredii (strain NBRC 101917 / NGR234).